Consider the following 372-residue polypeptide: Aminomethyltransferase (372 aa).

This sequence belongs to the GcvT family. The glycine cleavage system is composed of four proteins: P, T, L and H.

It carries out the reaction N(6)-[(R)-S(8)-aminomethyldihydrolipoyl]-L-lysyl-[protein] + (6S)-5,6,7,8-tetrahydrofolate = N(6)-[(R)-dihydrolipoyl]-L-lysyl-[protein] + (6R)-5,10-methylene-5,6,7,8-tetrahydrofolate + NH4(+). The glycine cleavage system catalyzes the degradation of glycine. In Prochlorococcus marinus (strain NATL1A), this protein is Aminomethyltransferase.